A 100-amino-acid chain; its full sequence is Class II hydrophobin 4 (100 aa).

Positions 1–17 (MQFYAIASLFLAGTAFA) are cleaved as a signal peptide. Cystine bridges form between cysteine 29–cysteine 79, cysteine 40–cysteine 70, cysteine 41–cysteine 53, and cysteine 80–cysteine 92.

Belongs to the cerato-ulmin hydrophobin family.

It is found in the secreted. It localises to the cell wall. Aerial growth, conidiation, and dispersal of filamentous fungi in the environment rely upon a capability of their secreting small amphipathic proteins called hydrophobins (HPBs) with low sequence identity. Class I can self-assemble into an outermost layer of rodlet bundles on aerial cell surfaces, conferring cellular hydrophobicity that supports fungal growth, development and dispersal; whereas Class II form highly ordered films at water-air interfaces through intermolecular interactions but contribute nothing to the rodlet structure. Does not seem to be important for the ability to cause seedling disease. This chain is Class II hydrophobin 4, found in Gibberella moniliformis (Maize ear and stalk rot fungus).